The chain runs to 499 residues: MKYVIGIDLGTSAVKTILVNQNGKVCAETSKRYPLIQEKAGYSEQNPEDWVQQTIEALAELVSISNVQAKDIDGISYSGQMHGLVLLDQDRQVLRNAILWNDTRTTPQCIRMTEKFGDHLLDITKNRVLEGFTLPKMLWVKEHEPELFKKTAVFLLPKDYVRFRMTGVIHTEYSDAAGTLLLHITRKEWSNDICNQIGISADICPPLVESHDCVGSLLPHVAAKTGLLEKTKVYAGGADNACGAIGAGILSSGKTLCSIGTSGVILSYEEEKERDFKGKVHFFNHGKKDSFYTMGVTLAAGYSLDWFKRTFAPNESFEQLLQGVEAIPIGANGLLYTPYLVGERTPHADSSIRGSLIGMDGAHNRKHFLRAIMEGITFSLHESIELFREAGKSVHTVVSIGGGAKNDTWLQMQADIFNTRVIKLENEQGPAMGAAMLAAFGSGWFESLEECAEQFIREAAAFYPKAQNVQKYKTLFDLYKNIYTHTKDLNTALKSFRKN.

81–82 (MH) lines the substrate pocket. The active-site Proton acceptor is Asp-239.

Belongs to the FGGY kinase family.

It carries out the reaction D-xylulose + ATP = D-xylulose 5-phosphate + ADP + H(+). Catalyzes the phosphorylation of D-xylulose to D-xylulose 5-phosphate. The chain is Xylulose kinase from Bacillus subtilis (strain 168).